A 293-amino-acid chain; its full sequence is Triplex capsid protein 2 (293 aa).

The protein belongs to the herpesviridae TRX2 protein family. As to quaternary structure, interacts with TRX1 and major capisd protein/MCP.

Its subcellular location is the virion. It is found in the host nucleus. Functionally, structural component of the T=16 icosahedral capsid. The capsid is composed of pentamers and hexamers of major capsid protein/MCP, which are linked together by heterotrimers called triplexes. These triplexes are formed by a single molecule of triplex protein 1/TRX1 and two copies of triplex protein 2/TRX2. Additionally, TRX1 is required for efficient transport of TRX2 to the nucleus, which is the site of capsid assembly. This Homo sapiens (Human) protein is Triplex capsid protein 2.